The primary structure comprises 352 residues: uncharacterized protein (352 aa).

Residues Asn-14, Asn-52, and Asn-70 are each glycosylated (N-linked (GlcNAc...) asparagine). The segment at 41-73 (LSDYKKNKDTLNNSNNNINQPFENSNNFNNNSK) is disordered. Residues 50–72 (TLNNSNNNINQPFENSNNFNNNS) are compositionally biased toward low complexity. The helical transmembrane segment at 131–151 (IIFKSSGLLITLLVLYLGTFF) threads the bilayer. Residues Asn-165, Asn-186, Asn-192, Asn-193, Asn-203, and Asn-289 are each glycosylated (N-linked (GlcNAc...) asparagine). A compositionally biased stretch (low complexity) spans 193 to 213 (NSSNSNNNNINNSNNNNNNNN). Residues 193-219 (NSSNSNNNNINNSNNNNNNNNRILSPN) form a disordered region.

It is found in the membrane. This is an uncharacterized protein from Dictyostelium discoideum (Social amoeba).